Reading from the N-terminus, the 71-residue chain is Large ribosomal subunit protein bL31 (71 aa).

Cysteine 16, cysteine 18, cysteine 38, and cysteine 41 together coordinate Zn(2+).

Belongs to the bacterial ribosomal protein bL31 family. Type A subfamily. In terms of assembly, part of the 50S ribosomal subunit. Zn(2+) serves as cofactor.

Its function is as follows. Binds the 23S rRNA. In Francisella tularensis subsp. novicida (strain U112), this protein is Large ribosomal subunit protein bL31.